The sequence spans 68 residues: Stage III sporulation protein AC (68 aa).

The next 2 membrane-spanning stretches (helical) occupy residues 5–25 (VNVIFQIAGVGIVVAFLHTIL) and 33–53 (YAQWVTLLGFIYILFMVATIV).

Its subcellular location is the cell membrane. The sequence is that of Stage III sporulation protein AC (spoIIIAC) from Bacillus subtilis (strain 168).